The chain runs to 210 residues: MAGGIVAVPLLGFSLLAVALIIERAYFWSQIQLRQNRLVNDVLKLYRSNPPGAIAKLKQNADLPMARIFLEALCLEGATPTEFRLALESATQAELPLLKRFNTLFQTIITVSPLLGLLGTILGLMRSFSSMSLGSTTAANASGVTGGISEALVSTVMGLVVAIATLLFANVFRSLYLRQFALIQEQTGQIELVYRRFHDQPEEKEYATSR.

A run of 3 helical transmembrane segments spans residues 2-22 (AGGIVAVPLLGFSLLAVALII), 104-124 (LFQTIITVSPLLGLLGTILGL), and 152-172 (LVSTVMGLVVAIATLLFANVF).

Belongs to the ExbB/TolQ family.

It localises to the cell inner membrane. Functionally, involved in the TonB-dependent energy-dependent transport of various receptor-bound substrates. Protects ExbD from proteolytic degradation and functionally stabilizes TonB. This is Putative biopolymer transport protein ExbB-like 3 from Synechocystis sp. (strain ATCC 27184 / PCC 6803 / Kazusa).